A 201-amino-acid polypeptide reads, in one-letter code: Alanine--tRNA ligase (201 aa).

This sequence belongs to the class-II aminoacyl-tRNA synthetase family. The cofactor is Zn(2+).

Its subcellular location is the cytoplasm. The enzyme catalyses tRNA(Ala) + L-alanine + ATP = L-alanyl-tRNA(Ala) + AMP + diphosphate. Its function is as follows. Catalyzes the attachment of alanine to tRNA(Ala) in a two-step reaction: alanine is first activated by ATP to form Ala-AMP and then transferred to the acceptor end of tRNA(Ala). Also edits incorrectly charged Ser-tRNA(Ala) and Gly-tRNA(Ala) via its editing domain. In Rhizobium leguminosarum bv. viciae, this protein is Alanine--tRNA ligase (alaS).